A 981-amino-acid polypeptide reads, in one-letter code: Ubiquitin carboxyl-terminal hydrolase 15 (981 aa).

An N-acetylalanine modification is found at alanine 2. A mediates interaction with SART3 region spans residues 2-223 (AEGGAADLDT…KNEDGTWPRG (222 aa)). The DUSP domain occupies 7–118 (ADLDTQRSDI…GQEPIARKVV (112 aa)). The segment at 216 to 237 (EDGTWPRGPSTPKSPGASNFST) is disordered. Residue threonine 226 is modified to Phosphothreonine. The segment covering 226-237 (TPKSPGASNFST) has biased composition (polar residues). Phosphoserine occurs at positions 229 and 242. A USP domain is found at 289 to 933 (CGLSNLGNTC…AAYVLFYQRQ (645 aa)). Catalysis depends on cysteine 298, which acts as the Nucleophile. Threonine 602 carries the phosphothreonine modification. The tract at residues 629–694 (GSLHCCKDQN…GGDNDSENGL (66 aa)) is disordered. A compositionally biased stretch (acidic residues) spans 656-673 (METDEPDDESSQDQELPS). Histidine 891 acts as the Proton acceptor in catalysis. The interval 952–981 (SAATGIPLESDEDSNDNDNDIENENCMHTN) is disordered. Residues 960-974 (ESDEDSNDNDNDIEN) are compositionally biased toward acidic residues. Phosphoserine is present on residues serine 961 and serine 965.

Belongs to the peptidase C19 family. As to quaternary structure, a homodimer structure has been reported; however it is unclear whether the protein form a homodimer in vivo. Identified in a complex with the COP9 signalosome complex (CSN). Interacts with SMAD1, SMAD2 and SMAD3; the interaction is direct. Forms a complex with SMURF2 and SMAD7. Interacts with TGFBR1. Interacts with SART3; the interaction is direct. May interact with RNF20 and RNF40. May interact with PRKN. Interacts with INCA1. (Microbial infection) Interacts with human papillomavirus type 16 protein E6. Phosphorylated. Phosphorylation protects against ubiquitination and subsequent degradation by the proteasome. Post-translationally, ubiquitinated, leading to degradation by the proteasome. Expressed in skeletal muscle, kidney, heart, placenta, liver, thymus, lung, and ovary, with little or no expression in other tissues.

It localises to the cytoplasm. The protein localises to the nucleus. The protein resides in the mitochondrion. It catalyses the reaction Thiol-dependent hydrolysis of ester, thioester, amide, peptide and isopeptide bonds formed by the C-terminal Gly of ubiquitin (a 76-residue protein attached to proteins as an intracellular targeting signal).. Hydrolase that removes conjugated ubiquitin from target proteins and regulates various pathways such as the TGF-beta receptor signaling, NF-kappa-B and RNF41/NRDP1-PRKN pathways. Acts as a key regulator of TGF-beta receptor signaling pathway, but the precise mechanism is still unclear: according to a report, acts by promoting deubiquitination of monoubiquitinated R-SMADs (SMAD1, SMAD2 and/or SMAD3), thereby alleviating inhibition of R-SMADs and promoting activation of TGF-beta target genes. According to another reports, regulates the TGF-beta receptor signaling pathway by mediating deubiquitination and stabilization of TGFBR1, leading to an enhanced TGF-beta signal. Able to mediate deubiquitination of monoubiquitinated substrates, 'Lys-27'-, 'Lys-48'- and 'Lys-63'-linked polyubiquitin chains. May also regulate gene expression and/or DNA repair through the deubiquitination of histone H2B. Acts as an inhibitor of mitophagy by counteracting the action of parkin (PRKN): hydrolyzes cleavage of 'Lys-48'- and 'Lys-63'-linked polyubiquitin chains attached by parkin on target proteins such as MFN2, thereby reducing parkin's ability to drive mitophagy. Acts as an associated component of COP9 signalosome complex (CSN) and regulates different pathways via this association: regulates NF-kappa-B by mediating deubiquitination of NFKBIA and deubiquitinates substrates bound to VCP. Involved in endosome organization by mediating deubiquitination of SQSTM1: ubiquitinated SQSTM1 forms a molecular bridge that restrains cognate vesicles in the perinuclear region and its deubiquitination releases target vesicles for fast transport into the cell periphery. Acts as a negative regulator of antifungal immunity by mediating 'Lys-27'-linked deubiquitination of CARD9, thereby inactivating CARD9. In terms of biological role, (Microbial infection) Protects APC and human papillomavirus type 16 protein E6 against degradation via the ubiquitin proteasome pathway. This Homo sapiens (Human) protein is Ubiquitin carboxyl-terminal hydrolase 15.